The primary structure comprises 1024 residues: Beta-galactosidase (1024 aa).

Positions 103 and 202 each coordinate substrate. Residue aspartate 202 coordinates Na(+). The Mg(2+) site is built by glutamate 417, histidine 419, and glutamate 462. Residues glutamate 462 and 538-541 (EYAH) contribute to the substrate site. The Proton donor role is filled by glutamate 462. The Nucleophile role is filled by glutamate 538. Position 598 (asparagine 598) interacts with Mg(2+). Positions 602 and 605 each coordinate Na(+). Asparagine 605 and tryptophan 1000 together coordinate substrate.

Belongs to the glycosyl hydrolase 2 family. As to quaternary structure, homotetramer. Requires Mg(2+) as cofactor. Na(+) is required as a cofactor.

It carries out the reaction Hydrolysis of terminal non-reducing beta-D-galactose residues in beta-D-galactosides.. This chain is Beta-galactosidase, found in Shigella sonnei (strain Ss046).